Consider the following 1007-residue polypeptide: Retinoblastoma-related protein (1007 aa).

The segment at 406–604 (TPVTTAMTTA…EKGSSMYNSL (199 aa)) is domain A. Positions 406–856 (TPVTTAMTTA…NEIFIPAVKP (451 aa)) are pocket. The segment at 605–725 (IVARAALSAE…PGREGETCAE (121 aa)) is spacer. The interval 644–665 (PVPSLQKRESSPGQNGDIRSPK) is disordered. Residues 726 to 856 (TGINIFFSKI…NEIFIPAVKP (131 aa)) form a domain B region.

The protein belongs to the retinoblastoma protein (RB) family.

The protein resides in the nucleus. Functionally, regulator of biological processes that recruits a histone deacetylase to control gene transcription. May play a role in the entry into mitosis, negatively regulating the cell proliferation. Formation of stable complexes with geminiviridae replication-associated proteins may create a cellular environment which favors viral DNA replication. In Vitis vinifera (Grape), this protein is Retinoblastoma-related protein (RBR).